A 903-amino-acid polypeptide reads, in one-letter code: Protein translocase subunit SecA (903 aa).

Residues Gln-87, 105–109 (GEGKT), and Asp-513 contribute to the ATP site. Over residues 840 to 853 (MEAQRRAQAEEAAR) the composition is skewed to basic and acidic residues. The interval 840-903 (MEAQRRAQAE…KYKQCHGQIN (64 aa)) is disordered. Cys-887, Cys-889, Cys-898, and His-899 together coordinate Zn(2+).

The protein belongs to the SecA family. As to quaternary structure, monomer and homodimer. Part of the essential Sec protein translocation apparatus which comprises SecA, SecYEG and auxiliary proteins SecDF-YajC and YidC. Zn(2+) serves as cofactor.

The protein resides in the cell inner membrane. The protein localises to the cytoplasm. It carries out the reaction ATP + H2O + cellular proteinSide 1 = ADP + phosphate + cellular proteinSide 2.. In terms of biological role, part of the Sec protein translocase complex. Interacts with the SecYEG preprotein conducting channel. Has a central role in coupling the hydrolysis of ATP to the transfer of proteins into and across the cell membrane, serving both as a receptor for the preprotein-SecB complex and as an ATP-driven molecular motor driving the stepwise translocation of polypeptide chains across the membrane. This Vibrio cholerae serotype O1 (strain M66-2) protein is Protein translocase subunit SecA.